The primary structure comprises 774 residues: Beta-D-xylosidase 1 (774 aa).

Positions 1 to 30 are cleaved as a signal peptide; it reads MSCYNKALLIGNKVVVILVFLLCLVHSSES. N-linked (GlcNAc...) asparagine glycosylation is present at Asn131. The active site involves Asp296. The N-linked (GlcNAc...) asparagine glycan is linked to Asn658.

Belongs to the glycosyl hydrolase 3 family. As to expression, expressed in leaves, stems, seedlings, roots, inflorescences, siliques and developing seeds. Expressed in the vasculature of the roots, leaves, flowers and silique. Expressed in tissues undergoing secondary cell wall thickening such as protoxylem, metaxylem, intrafascicular cambium and fibers.

The protein localises to the secreted. It is found in the extracellular space. The protein resides in the extracellular matrix. The catalysed reaction is Hydrolysis of terminal non-reducing alpha-L-arabinofuranoside residues in alpha-L-arabinosides.. Its function is as follows. Involved in pectic arabinan modification in mucilage secretory cells. Also acts as a beta-D-xylosidase during the remodeling of xylans in vascular development. The polypeptide is Beta-D-xylosidase 1 (BXL1) (Arabidopsis thaliana (Mouse-ear cress)).